The chain runs to 158 residues: D-aminoacyl-tRNA deacylase (158 aa).

The short motif at 138 to 139 (GP) is the Gly-cisPro motif, important for rejection of L-amino acids element.

This sequence belongs to the DTD family. Homodimer.

The protein resides in the cytoplasm. It carries out the reaction glycyl-tRNA(Ala) + H2O = tRNA(Ala) + glycine + H(+). It catalyses the reaction a D-aminoacyl-tRNA + H2O = a tRNA + a D-alpha-amino acid + H(+). Functionally, an aminoacyl-tRNA editing enzyme that deacylates mischarged D-aminoacyl-tRNAs. Hydrolyzes correctly charged, achiral, glycyl-tRNA(Gly). Deacylates mischarged endogenous and E.coli glycyl-tRNA(Ala), protecting cells against glycine mischarging by AlaRS. Acts via tRNA-based rather than protein-based catalysis; rejects L-amino acids rather than detecting D-amino acids in the active site. By recycling D-aminoacyl-tRNA to D-amino acids and free tRNA molecules, this enzyme counteracts the toxicity associated with the formation of D-aminoacyl-tRNA entities in vivo and helps enforce protein L-homochirality. The protein is D-aminoacyl-tRNA deacylase of Drosophila melanogaster (Fruit fly).